Consider the following 117-residue polypeptide: Large ribosomal subunit protein bL19 (117 aa).

This sequence belongs to the bacterial ribosomal protein bL19 family.

In terms of biological role, this protein is located at the 30S-50S ribosomal subunit interface and may play a role in the structure and function of the aminoacyl-tRNA binding site. This chain is Large ribosomal subunit protein bL19, found in Shewanella pealeana (strain ATCC 700345 / ANG-SQ1).